The sequence spans 262 residues: Acyl-[acyl-carrier-protein]--UDP-N-acetylglucosamine O-acyltransferase (262 aa).

This sequence belongs to the transferase hexapeptide repeat family. LpxA subfamily. As to quaternary structure, homotrimer.

Its subcellular location is the cytoplasm. It catalyses the reaction a (3R)-hydroxyacyl-[ACP] + UDP-N-acetyl-alpha-D-glucosamine = a UDP-3-O-[(3R)-3-hydroxyacyl]-N-acetyl-alpha-D-glucosamine + holo-[ACP]. It participates in glycolipid biosynthesis; lipid IV(A) biosynthesis; lipid IV(A) from (3R)-3-hydroxytetradecanoyl-[acyl-carrier-protein] and UDP-N-acetyl-alpha-D-glucosamine: step 1/6. Its function is as follows. Involved in the biosynthesis of lipid A, a phosphorylated glycolipid that anchors the lipopolysaccharide to the outer membrane of the cell. The sequence is that of Acyl-[acyl-carrier-protein]--UDP-N-acetylglucosamine O-acyltransferase from Vibrio campbellii (strain ATCC BAA-1116).